We begin with the raw amino-acid sequence, 285 residues long: Phosphatidylserine decarboxylase proenzyme (285 aa).

Residues D96, H152, and S250 each act as charge relay system; for autoendoproteolytic cleavage activity in the active site. Residue S250 is the Schiff-base intermediate with substrate; via pyruvic acid; for decarboxylase activity of the active site. Position 250 is a pyruvic acid (Ser); by autocatalysis (S250).

It belongs to the phosphatidylserine decarboxylase family. PSD-B subfamily. Prokaryotic type I sub-subfamily. As to quaternary structure, heterodimer of a large membrane-associated beta subunit and a small pyruvoyl-containing alpha subunit. Requires pyruvate as cofactor. In terms of processing, is synthesized initially as an inactive proenzyme. Formation of the active enzyme involves a self-maturation process in which the active site pyruvoyl group is generated from an internal serine residue via an autocatalytic post-translational modification. Two non-identical subunits are generated from the proenzyme in this reaction, and the pyruvate is formed at the N-terminus of the alpha chain, which is derived from the carboxyl end of the proenzyme. The autoendoproteolytic cleavage occurs by a canonical serine protease mechanism, in which the side chain hydroxyl group of the serine supplies its oxygen atom to form the C-terminus of the beta chain, while the remainder of the serine residue undergoes an oxidative deamination to produce ammonia and the pyruvoyl prosthetic group on the alpha chain. During this reaction, the Ser that is part of the protease active site of the proenzyme becomes the pyruvoyl prosthetic group, which constitutes an essential element of the active site of the mature decarboxylase.

The protein resides in the cell membrane. It catalyses the reaction a 1,2-diacyl-sn-glycero-3-phospho-L-serine + H(+) = a 1,2-diacyl-sn-glycero-3-phosphoethanolamine + CO2. The protein operates within phospholipid metabolism; phosphatidylethanolamine biosynthesis; phosphatidylethanolamine from CDP-diacylglycerol: step 2/2. Its function is as follows. Catalyzes the formation of phosphatidylethanolamine (PtdEtn) from phosphatidylserine (PtdSer). The sequence is that of Phosphatidylserine decarboxylase proenzyme from Acinetobacter baylyi (strain ATCC 33305 / BD413 / ADP1).